Here is an 862-residue protein sequence, read N- to C-terminus: Molybdenum cofactor sulfurase (862 aa).

Phosphoserine is present on serine 34. Lysine 264 carries the N6-(pyridoxal phosphate)lysine modification. Cysteine 424 is an active-site residue. Residue serine 517 is modified to Phosphoserine. One can recognise an MOSC domain in the interval 704-855; that stretch reads RKTPKKGQPP…LSVGSEVLPV (152 aa).

The protein belongs to the class-V pyridoxal-phosphate-dependent aminotransferase family. MOCOS subfamily. The cofactor is pyridoxal 5'-phosphate.

It catalyses the reaction Mo-molybdopterin + L-cysteine + AH2 = thio-Mo-molybdopterin + L-alanine + A + H2O. It participates in cofactor biosynthesis; molybdopterin biosynthesis. Sulfurates the molybdenum cofactor. Sulfation of molybdenum is essential for xanthine dehydrogenase (XDH) and aldehyde oxidase (ADO) enzymes in which molybdenum cofactor is liganded by 1 oxygen and 1 sulfur atom in active form. This is Molybdenum cofactor sulfurase (Mocos) from Mus musculus (Mouse).